Here is a 172-residue protein sequence, read N- to C-terminus: Ribosome maturation factor RimM (172 aa).

Residues 97 to 170 (ENEFYFHEII…KITIEVMEGL (74 aa)) form the PRC barrel domain.

The protein belongs to the RimM family. As to quaternary structure, binds ribosomal protein uS19.

It localises to the cytoplasm. An accessory protein needed during the final step in the assembly of 30S ribosomal subunit, possibly for assembly of the head region. Essential for efficient processing of 16S rRNA. May be needed both before and after RbfA during the maturation of 16S rRNA. It has affinity for free ribosomal 30S subunits but not for 70S ribosomes. This is Ribosome maturation factor RimM from Listeria monocytogenes serovar 1/2a (strain ATCC BAA-679 / EGD-e).